Here is a 627-residue protein sequence, read N- to C-terminus: MQRVLNKIISKDTINTMGKVAISKKVEKLRTFMKDQSLSAYIVPSEDAHQSEYICVKDKRREYISGFSGSAGCVVITLDNQLLWTDGRYWLQAEKELESNWKIMKDRVVGEPTIQDWLLSNLNKENKVGIDSRLISKGYYDSMKLVLKEKSIDIKFDEDGENLIDKVRESFKDEEEIPEYPKNSIFFLEDKFTGKQSNEKLKEIREEMKKQSADLMVVSALDEIAWLLNLRGSDISFNPVFLSYVVVEHEKVTLFVDESKLNDKTKSQLPSGIAISPYSSVFEYLRNSDKQGKKIWIDPRSSVALYNCVSISNLLEKINPILLSKAIKNETEIQGMKNAHIRDAVALIQFLAWMEEEIVEKSDETSHTEYSVCEKLEGFRRQQTDFVSLSFDTISSINANGAIIHYKPDETTSATIVKGMYLVDSGAQYLDGTTDVTRTLHYGKPTQHEIDCYTRVLRGHVGLSLLKFPNRVNGRDIDCVARTHLWSVGLDYAHGTGHGVGSFLNVHEGPQGISYRAIANPTNLQAGMTLTNEPGYYESGNFGIRIENVMIVAPVTTQFNNGKFIGFDNITLVPYERKLINLEMLTKDEINFINDYYKEIGEKILPLIEKTNNQKSINWLKNQIKPL.

The a peptide site is built by Arg88 and His405. Mn(2+) contacts are provided by Asp424, Asp435, and His498. The a peptide site is built by His498, His507, and Glu533. Mn(2+) is bound by residues Glu533 and Glu547.

It belongs to the peptidase M24B family. As to quaternary structure, homodimer. The cofactor is Mn(2+).

The protein resides in the cytoplasm. Its subcellular location is the cytosol. It catalyses the reaction Release of any N-terminal amino acid, including proline, that is linked to proline, even from a dipeptide or tripeptide.. Metalloaminopeptidase that catalyzes the removal of a penultimate prolyl residue from the N-termini of peptides, such as Arg-Pro-Pro. The chain is Xaa-Pro aminopeptidase 1 (xpnpep1) from Dictyostelium discoideum (Social amoeba).